A 248-amino-acid chain; its full sequence is Triosephosphate isomerase (248 aa).

9 to 11 (NWK) contributes to the substrate binding site. Residue His94 is the Electrophile of the active site. Glu166 functions as the Proton acceptor in the catalytic mechanism. Substrate contacts are provided by residues Gly172, Ser212, and 233–234 (GG).

The protein belongs to the triosephosphate isomerase family. In terms of assembly, homodimer.

Its subcellular location is the cytoplasm. The catalysed reaction is D-glyceraldehyde 3-phosphate = dihydroxyacetone phosphate. It participates in carbohydrate biosynthesis; gluconeogenesis. It functions in the pathway carbohydrate degradation; glycolysis; D-glyceraldehyde 3-phosphate from glycerone phosphate: step 1/1. Its function is as follows. Involved in the gluconeogenesis. Catalyzes stereospecifically the conversion of dihydroxyacetone phosphate (DHAP) to D-glyceraldehyde-3-phosphate (G3P). The sequence is that of Triosephosphate isomerase from Thermoanaerobacter pseudethanolicus (strain ATCC 33223 / 39E) (Clostridium thermohydrosulfuricum).